We begin with the raw amino-acid sequence, 392 residues long: Pyoverdine export membrane fusion protein PvdR (392 aa).

A signal peptide (tat-type signal) is located at residues Met-1–Pro-36. Residues Ile-109–Glu-181 are a coiled coil. Positions Pro-267 to Ala-286 are disordered.

This sequence belongs to the membrane fusion protein (MFP) (TC 8.A.1) family. Part of the tripartite efflux system PvdRT-OpmQ, which is composed of an inner membrane component with both ATPase and permease domains, PvdT, a periplasmic membrane fusion protein, PvdR, and an outer membrane component, OpmQ. Predicted to be exported by the Tat system. The position of the signal peptide cleavage has not been experimentally proven.

Its subcellular location is the periplasm. Its function is as follows. Part of the tripartite efflux system PvdRT-OpmQ required for the secretion into the extracellular milieu of the siderophore pyoverdine (PVD), which is involved in iron acquisition. This subunit is an adapter protein that stimulates the ATPase activity of PvdT and connects the inner and outer membrane components. The system is responsible for export of newly synthesized PVD after the final steps of biosynthesis have taken place in the periplasm. It is also responsible for recycling of PVD after internalization of ferri-PVD into the periplasm by the outer-membrane receptor FpvA and release of iron from PVD, thus making PVD available for new cycles of iron uptake. Contributes to resistance against ampicillin. The polypeptide is Pyoverdine export membrane fusion protein PvdR (Pseudomonas putida (strain ATCC 47054 / DSM 6125 / CFBP 8728 / NCIMB 11950 / KT2440)).